The following is a 497-amino-acid chain: MFTIKQQLSLDTTHEVLVVGMFEKNQPLDGIIAECDRRLGGQVSVLLKEGDISAKKKQISKVHTLNQAGVKRLYFVGLGKEEELTFDLLREAFGKLFKTLKQAKRTEAAIALDTFVTKDIDANDAAHALSEAYYLATYEFPGYKQKKNEPEKRIESITIYTEADQAEIEASVFVGSVYGKATNSARTLVNTPSNLLTAADLANYAVELANKYEFEYEILEKDDMEKLGMGAFLAVNQGSKNPPKMIVLKYQGKETWENVIGLVGKGVTFDTGGYSLKPRESMVDMKTDMAGAAAVLGAMEIIGELRPEQNVVAVIPATDNMISGEAFKPDDVITSMSGKTIEVKNTDAEGRLILADAITYAKHHGASYLIDVATLTGGVIVALGVHTTGAMTNNEALFEQVLEASAETGEFIWRLPITEKDKERVRSSKIADLNNSPGREGHAIMGGAFLGEFAEDTPWVHLDIAGTSVTSKEHDLGPSGATGVMVRTLATLVERFE.

The Mn(2+) site is built by lysine 265 and aspartate 270. Residue lysine 277 is part of the active site. Mn(2+) contacts are provided by aspartate 288, aspartate 347, and glutamate 349. Residue arginine 351 is part of the active site.

Belongs to the peptidase M17 family. Requires Mn(2+) as cofactor.

The protein localises to the cytoplasm. The catalysed reaction is Release of an N-terminal amino acid, Xaa-|-Yaa-, in which Xaa is preferably Leu, but may be other amino acids including Pro although not Arg or Lys, and Yaa may be Pro. Amino acid amides and methyl esters are also readily hydrolyzed, but rates on arylamides are exceedingly low.. It carries out the reaction Release of an N-terminal amino acid, preferentially leucine, but not glutamic or aspartic acids.. Functionally, presumably involved in the processing and regular turnover of intracellular proteins. Catalyzes the removal of unsubstituted N-terminal amino acids from various peptides. The polypeptide is Probable cytosol aminopeptidase (Geobacillus sp. (strain WCH70)).